The primary structure comprises 274 residues: Shikimate dehydrogenase (NADP(+)) (274 aa).

Shikimate contacts are provided by residues 14-16 and Thr-61; that span reads SKS. Catalysis depends on Lys-65, which acts as the Proton acceptor. Residues Asn-86 and Asp-102 each coordinate shikimate. NADP(+) is bound by residues 126-130, 150-155, and Met-214; these read GAGGA and NRTAEK. Residue Tyr-216 participates in shikimate binding. Residue Gly-239 participates in NADP(+) binding.

Belongs to the shikimate dehydrogenase family. In terms of assembly, homodimer.

The catalysed reaction is shikimate + NADP(+) = 3-dehydroshikimate + NADPH + H(+). It functions in the pathway metabolic intermediate biosynthesis; chorismate biosynthesis; chorismate from D-erythrose 4-phosphate and phosphoenolpyruvate: step 4/7. In terms of biological role, involved in the biosynthesis of the chorismate, which leads to the biosynthesis of aromatic amino acids. Catalyzes the reversible NADPH linked reduction of 3-dehydroshikimate (DHSA) to yield shikimate (SA). This chain is Shikimate dehydrogenase (NADP(+)), found in Pseudoalteromonas translucida (strain TAC 125).